A 220-amino-acid polypeptide reads, in one-letter code: VQ motif-containing protein 5 (220 aa).

A VQ motif is present at residues 49-57; the sequence is FKSLVQQLT. Disordered stretches follow at residues 61–80 and 131–171; these read PCDR…PEPI and HMMA…GASS. 2 stretches are compositionally biased toward polar residues: residues 133-150 and 157-171; these read MAQS…QSNG and SWFN…GASS.

The protein resides in the nucleus. In terms of biological role, may function as negative regulator of plant defense. This chain is VQ motif-containing protein 5, found in Arabidopsis thaliana (Mouse-ear cress).